The sequence spans 316 residues: MKIFIHLPTWLGDAVMASPALYAIKEHFKNTQFILYGSLVSTALFREFPNSKIIIENKQTRYKQALSLRKELGKIDLSFAFRSAFSSKIILHILKTKQRYFFDKNKHKEEHQVLKYLYFIENSLSIKAHFKDLKLPFKLKFQNPLILKNGKKILGLNPGASFGSAKRWDASYFAKVALNFSQSHEILIFGAGKAEQELCNEIYQILKEQNIKVKNLCNKTTIKTLCQNIAFCDLFITNDSGPMHISTVYKIKTVAIFGPTKFTQTSPWQNQNAKLVHLDLACMPCMQKTCPLKHHKCMKDLKPEKVIEEIKKLSTP.

This sequence belongs to the glycosyltransferase 9 family.

The enzyme catalyses an L-alpha-D-Hep-(1-&gt;5)-[alpha-Kdo-(2-&gt;4)]-alpha-Kdo-(2-&gt;6)-lipid A + ADP-L-glycero-beta-D-manno-heptose = an L-alpha-D-Hep-(1-&gt;3)-L-alpha-D-Hep-(1-&gt;5)-[alpha-Kdo-(2-&gt;4)]-alpha-Kdo-(2-&gt;6)-lipid A + ADP + H(+). It functions in the pathway bacterial outer membrane biogenesis; LOS core biosynthesis. Functionally, glycosyltransferase involved in the biosynthesis of the core oligosaccharide region of lipooligosaccharide (LOS). Catalyzes the addition of the second heptose unit to the heptosyl-Kdo2-lipid A module. This is Lipooligosaccharide heptosyltransferase 2 from Campylobacter jejuni subsp. jejuni serotype O:6 (strain 81116 / NCTC 11828).